Reading from the N-terminus, the 154-residue chain is Ribonuclease H (154 aa).

An RNase H type-1 domain is found at 1 to 142; the sequence is MKQVDIFTDG…CDTIARGHAS (142 aa). Mg(2+)-binding residues include Asp-9, Glu-47, Asp-69, and Asp-134.

This sequence belongs to the RNase H family. As to quaternary structure, monomer. Requires Mg(2+) as cofactor.

It localises to the cytoplasm. The catalysed reaction is Endonucleolytic cleavage to 5'-phosphomonoester.. In terms of biological role, endonuclease that specifically degrades the RNA of RNA-DNA hybrids. The sequence is that of Ribonuclease H from Oleidesulfovibrio alaskensis (strain ATCC BAA-1058 / DSM 17464 / G20) (Desulfovibrio alaskensis).